A 94-amino-acid polypeptide reads, in one-letter code: Small ribosomal subunit protein uS19 (94 aa).

It belongs to the universal ribosomal protein uS19 family.

Protein S19 forms a complex with S13 that binds strongly to the 16S ribosomal RNA. The protein is Small ribosomal subunit protein uS19 (rpsS) of Lactobacillus acidophilus (strain ATCC 700396 / NCK56 / N2 / NCFM).